The sequence spans 216 residues: MKGLFISGSGTNVGKTFIAQYLIKFLTNILKVRVRKPVESDCKNKNGKLIPKDALLLSKACNIIESIDKICRYKFQACSSAQIASQALGLKLTLDDLVDACIADEFVVVEGAGGLLSPIATKTLNSDLVQAINVPVVLVIKDELGAVNQALLSINAAQHYKLNISMVVLNQIYPNLLGNEKEITQYTNANIVVFNQNDLKSFERQIEKILLADLIK.

12–17 (NVGKTF) provides a ligand contact to ATP. Thr16 contacts Mg(2+). The active site involves Lys36. Ser40 provides a ligand contact to substrate. Residues Asp53, 110–113 (EGAG), and 170–171 (NQ) each bind ATP. Mg(2+) contacts are provided by Asp53 and Glu110.

It belongs to the dethiobiotin synthetase family. Homodimer. The cofactor is Mg(2+).

The protein resides in the cytoplasm. The enzyme catalyses (7R,8S)-7,8-diammoniononanoate + CO2 + ATP = (4R,5S)-dethiobiotin + ADP + phosphate + 3 H(+). Its pathway is cofactor biosynthesis; biotin biosynthesis; biotin from 7,8-diaminononanoate: step 1/2. Catalyzes a mechanistically unusual reaction, the ATP-dependent insertion of CO2 between the N7 and N8 nitrogen atoms of 7,8-diaminopelargonic acid (DAPA, also called 7,8-diammoniononanoate) to form a ureido ring. The sequence is that of ATP-dependent dethiobiotin synthetase BioD from Vesicomyosocius okutanii subsp. Calyptogena okutanii (strain HA).